The sequence spans 373 residues: GDP-mannose 4,6 dehydratase 2 (373 aa).

The span at 1–15 (MASENNGSRSDSESI) shows a compositional bias: polar residues. The segment at 1–21 (MASENNGSRSDSESITAPKAD) is disordered. NADP(+)-binding positions include 35-40 (GITGQD), arginine 60, 91-92 (DL), 113-117 (LAAQS), and tyrosine 128. Residue serine 117 participates in substrate binding. Substrate is bound at residue serine 162. Residue serine 162 is part of the active site. Active-site nucleophile residues include glutamate 164 and tyrosine 185. Tyrosine 185 is a binding site for substrate. Lysine 189 lines the NADP(+) pocket. Asparagine 214 contributes to the substrate binding site. 2 residues coordinate NADP(+): histidine 215 and arginine 220. Substrate-binding positions include 220–228 (RGENFVTRK), glycine 247, arginine 253, and 314–317 (RPAE).

This sequence belongs to the NAD(P)-dependent epimerase/dehydratase family. GDP-mannose 4,6-dehydratase subfamily. As to quaternary structure, homotetramer. Binds to GER1. It depends on NADP(+) as a cofactor. As to expression, expressed in roots, flowers, siliques, leaves and stems. Not expressed in the root meristem and the proximal part of the elongation zone, or in emerging lateral roots. Expressed in trichomes and guard cells, and in pollen just before anthesis.

The enzyme catalyses GDP-alpha-D-mannose = GDP-4-dehydro-alpha-D-rhamnose + H2O. The protein operates within nucleotide-sugar biosynthesis; GDP-L-fucose biosynthesis via de novo pathway; GDP-L-fucose from GDP-alpha-D-mannose: step 1/2. Its function is as follows. Catalyzes the conversion of GDP-D-mannose to GDP-4-dehydro-6-deoxy-D-mannose. The chain is GDP-mannose 4,6 dehydratase 2 (MUR1) from Arabidopsis thaliana (Mouse-ear cress).